Reading from the N-terminus, the 503-residue chain is Cytochrome P450 monooxygenase lnbC (503 aa).

A helical transmembrane segment spans residues 14 to 34 (VVLLLSSVWIAVHLVLAAYNV). 2 N-linked (GlcNAc...) asparagine glycosylation sites follow: Asn94 and Asn169. A heme-binding site is contributed by Cys446.

It belongs to the cytochrome P450 family. It depends on heme as a cofactor.

It localises to the membrane. Its pathway is secondary metabolite biosynthesis. Cytochrome P450 monooxygenase; part of the lnb gene cluster that mediates the biosynthesis of diastereomeric piperazines. Lna and lnb clusters encode sets of enzymes that produce overlapping sets of previously undescribed metabolites such as piperazinomycin-like metabolites or morpholine. The lna and lnb biosynthetic pathways appear to be part of a signaling network that controls the formation of sclerotia, a resilient overwintering structure. One primary function of the non-canonical nonribosomal peptide synthetases lnaA and lnbA consists in the reduction of L-tyrosine. The presence in the clusters of tailoring enzymes such as the oxidoreductases lnaB, lnbB, lnaE or lnbE, as well as of the cytochrome P450 monooxygenases lnaC, lnaD, or lnbC, might explain formation of various diastereomeric piperazines. This Aspergillus flavus (strain ATCC 200026 / FGSC A1120 / IAM 13836 / NRRL 3357 / JCM 12722 / SRRC 167) protein is Cytochrome P450 monooxygenase lnbC.